A 729-amino-acid chain; its full sequence is Elongation factor 2 (729 aa).

The tr-type G domain occupies glutamate 19–valine 262. Residues alanine 28–threonine 35, aspartate 94–histidine 98, and asparagine 148–aspartate 151 each bind GTP. At histidine 597 the chain carries Diphthamide.

This sequence belongs to the TRAFAC class translation factor GTPase superfamily. Classic translation factor GTPase family. EF-G/EF-2 subfamily.

It localises to the cytoplasm. In terms of biological role, catalyzes the GTP-dependent ribosomal translocation step during translation elongation. During this step, the ribosome changes from the pre-translocational (PRE) to the post-translocational (POST) state as the newly formed A-site-bound peptidyl-tRNA and P-site-bound deacylated tRNA move to the P and E sites, respectively. Catalyzes the coordinated movement of the two tRNA molecules, the mRNA and conformational changes in the ribosome. The protein is Elongation factor 2 of Natronomonas pharaonis (strain ATCC 35678 / DSM 2160 / CIP 103997 / JCM 8858 / NBRC 14720 / NCIMB 2260 / Gabara) (Halobacterium pharaonis).